Reading from the N-terminus, the 3916-residue chain is Fusarin C synthetase (3916 aa).

The Ketosynthase family 3 (KS3) domain occupies 9-440; the sequence is KEPIAIIGTS…GTNVHAIIEQ (432 aa). Catalysis depends on for beta-ketoacyl synthase activity residues cysteine 182, histidine 319, and histidine 360. Positions 548 to 866 are malonyl-CoA:ACP transacylase (MAT) domain; the sequence is VFTGQGAQWP…QGTVARNIHD (319 aa). The N-terminal hotdog fold stretch occupies residues 935 to 1068; the sequence is HPLLGARSVE…GQLRVEFGCS (134 aa). The dehydratase (DH) domain stretch occupies residues 935–1228; it reads HPLLGARSVE…GLTCTSLLRP (294 aa). A PKS/mFAS DH domain is found at 935-1231; it reads HPLLGARSVE…CTSLLRPGPS (297 aa). Catalysis depends on histidine 967, which acts as the Proton acceptor; for dehydratase activity. Positions 1084-1231 are C-terminal hotdog fold; the sequence is LTSVNMERFY…CTSLLRPGPS (148 aa). Aspartate 1141 functions as the Proton donor; for dehydratase activity in the catalytic mechanism. Residues 1347–1575 form a C-methyltransferase (CMeT) domain region; the sequence is IQAVGENLPS…VNDFVDAEKY (229 aa). The tract at residues 2092-2266 is ketoreductase (KR) domain 1; the sequence is TYLLIGCTGG…AASVMHIGMV (175 aa). One can recognise a Carrier 1 domain in the interval 2372-2449; the sequence is EILAVVEEEF…ELCSTVVSHL (78 aa). At serine 2409 the chain carries O-(pantetheine 4'-phosphoryl)serine. The disordered stretch occupies residues 2487–2510; the sequence is NEPFTIRNSPNSTQVTSEAGVDED. Residues 2492–2503 are compositionally biased toward polar residues; that stretch reads IRNSPNSTQVTS. The interval 2522–2806 is condensation; that stretch reads PLSFAQERLW…VNLLPLRLKI (285 aa). An adenylation region spans residues 2975 to 3385; that stretch reads EFVVKQPDDT…RIAGDSQIKL (411 aa). Residues 3493–3570 form the Carrier 2 domain; it reads KPLTETQERL…EMAAKIDGST (78 aa). Serine 3530 carries the O-(pantetheine 4'-phosphoryl)serine modification. Positions 3612–3833 are thiolester reductase (R) domain; sequence LTGATGFLGV…DFVPVDVVAA (222 aa).

It in the C-terminal section; belongs to the NRP synthetase family.

The protein operates within mycotoxin biosynthesis. In terms of biological role, fusarin C synthetase; part of the gene cluster that mediates the biosynthesis of the mycotoxin fusarin C. Within the cluster, FUS1, FUS2, FUS8 and FUS9 are sufficient for fusarin production. The roles of the other FUS members are yet undetermined. The fusarin C synthetase FUS1 is responsible for the condensation of one acetyl-coenzyme A (CoA) unit with six malonyl-CoA units and the amide linkage of the arising heptaketide and homoserine, subsequently releasing the first intermediate, prefusarin, as an alcohol with an open ring structure. The cytochrome P450 monooxygenase FUS8 participates in multiple oxidation processes at carbon C-20 and is able to use the FUS1 product as substrate, resulting in formation of 20-hydroxy-prefusarin. This reaction seems to be essential before the 2-pyrrolidone ring closure can be catalyzed by FUS2, generating 20-hydroxy-fusarin. FUS8 is able to further oxidizes carbon C-20 after ring closure, resulting in the formation of carboxy-fusarin C. As the last step, FUS9 methylates the hydroxyl group at C-21 to generate fusarin C. Fusarin C can then rearrange to epi-fusarin C, the (z)-isomers, and fusarin A and fusarin D. The polypeptide is Fusarin C synthetase (Gibberella fujikuroi (strain CBS 195.34 / IMI 58289 / NRRL A-6831) (Bakanae and foot rot disease fungus)).